We begin with the raw amino-acid sequence, 143 residues long: Putative transcriptional regulatory protein PH0763 (143 aa).

Belongs to the Tfx family.

Its function is as follows. Putative transcriptional regulator. This Pyrococcus horikoshii (strain ATCC 700860 / DSM 12428 / JCM 9974 / NBRC 100139 / OT-3) protein is Putative transcriptional regulatory protein PH0763.